The primary structure comprises 723 residues: MIKHRPHGIEHPYAVSPDQRVPVLPLAGEPVLLGVVAPEADRVVCEWGTLELPLSATSAAAADAAALAGGEGHLSEAQAKSLGADGAWSVQTPPLAEPVKYRFHAHRGGAAESTEWFEVSPAVWTADGVGEVRGGGERVRGVEWLVSSQGVHRGRFRLQLQDGDRLVGFGERYDALDQRGRELDAVVFEQYKAQGVHGRTYLPMPFAHVVGADGNGWGFHVRTSRRTWYSSAGNELTVEVALGDEPVVDLAIYEGDPATVLTGFLDEVGRAEELPGWVFRLWASGNEWNTQQLVTARMDTHRDLAIPVGAVVIEAWSDEQGITIWRDAVYAVTEDGSAHRAEDFSYRPDGAWPDPKAMIDELHARGIKVILWQIPLQKTEFSTGQVAADAAAMVRDGHAVLEADGTAYRNRGWWFPQALMPDLSVQRTRDWWTEKRRYLVEHFDVDGFKTDGGEHAWGHDLVYADGRKGDEGNNLYPVHYARAFGDLLRSAGKAPVTFSRAGFTGSQAHGIFWAGDEDSTWQAFRSSVTAGLTAASCGIVYWGWDLAGFSGPVPDAELYLRAAAASAFMPIMQYHSEFNHHQLPLRDRTPWHVAETTGDDRVVPLFRRFATLRESLVPYLTEQAARTIATDRPLMRPLFFDHENDPEIWNHPYQYLLGDELLINPVLEPGATTWTTYLPAGEWIDVWTGDRVPSGLVTRDVPLEVVPVYCRASRWSELQPVFS.

D451 serves as the catalytic Nucleophile. E454 is a catalytic residue. Catalysis depends on D516, which acts as the Proton donor. H581 contacts substrate.

It belongs to the glycosyl hydrolase 31 family.

It localises to the cytoplasm. The catalysed reaction is cyclobis-(1-&gt;3)-alpha-D-isomaltosyl + 2 H2O = 2 isomaltose. Involved in the intracellular degradation of the cyclic tetrasaccharide cyclobis-(1-6)-alpha-nigerosyl (CNN) formed extracellularly from starch. Catalyzes the hydrolysis of the alpha-1,3-glucosidic linkage of cyclobis-(1-6)-alpha-nigerosyl (CNN) to yield isomaltose via a possible linear tetrasaccharide. It has a strong preference for the alpha-(1-3)-isomaltosyl moiety. The protein is 1,3-alpha-isomaltosidase of Kribbella flavida (strain DSM 17836 / JCM 10339 / NBRC 14399).